The sequence spans 385 residues: MTPQQSAQRLFQEKFNCTPTLNVYAPGRVNIIGEHTDYNDGFVMPCAINYGTAISGRKRDDSRFKVYAGDLQQWDEFDLAQEITPDSSKKWTGYVRGVVKFVQTHCPDFKCGADLVISGNVPLSAGLSSSASLEVAVGKFCQQLGNLPLTNTEIALIGQKAENQFVGCQCGNMDQLISALGQKDHLLMIDCRSLETIPTPIPANVAVMIVNSHVKHDLVAGEYNTRRQQCEVAAKFFGVKALRDVSLAQFKQREAELTALDPEVAKRARHVVTENQRVLDAVKALQSGNLALLGELMAQSHESMRDDFEITVPQIDYLVELAQIAIGKTGGARMTGGGFGGCIVAVAPVEKVEAVRQIIADNYAQQTGLKEDFYVCTASQGVSVC.

34-37 is a substrate binding site; that stretch reads EHTD. 124 to 130 serves as a coordination point for ATP; that stretch reads SAGLSSS. Residues serine 130 and glutamate 162 each coordinate Mg(2+). Aspartate 174 functions as the Proton acceptor in the catalytic mechanism. Tyrosine 223 is a substrate binding site.

The protein belongs to the GHMP kinase family. GalK subfamily.

The protein resides in the cytoplasm. It carries out the reaction alpha-D-galactose + ATP = alpha-D-galactose 1-phosphate + ADP + H(+). It functions in the pathway carbohydrate metabolism; galactose metabolism. Functionally, catalyzes the transfer of the gamma-phosphate of ATP to D-galactose to form alpha-D-galactose-1-phosphate (Gal-1-P). The polypeptide is Galactokinase (Pasteurella multocida (strain Pm70)).